The chain runs to 785 residues: uncharacterized protein (785 aa).

A compositionally biased stretch (polar residues) spans 53–65; it reads KNTLTGSHGSNDL. The segment at 53–162 is disordered; the sequence is KNTLTGSHGS…RKAADEQGPI (110 aa). Acidic residues predominate over residues 66 to 79; the sequence is ATDESLDSPEDEEA. Positions 81 to 94 are enriched in polar residues; sequence SPLQLGTPTSTTSG. Serine 215 carries the post-translational modification Phosphoserine. Disordered stretches follow at residues 571–590 and 631–657; these read KVVDSDDEESDSDESVTSVN and DSSGRKLTPIESRNSRRSSKRSSRIQF. Residues 575–584 are compositionally biased toward acidic residues; the sequence is SDDEESDSDE. Phosphoserine is present on serine 667. Residues 693-785 are disordered; it reads DPKMKFTSHP…FGSIFKKVFG (93 aa). Over residues 725–739 the composition is skewed to basic residues; sequence RKAHHHHHHHNHVSR. Residues 776-785 show a composition bias toward low complexity; it reads FGSIFKKVFG.

This is an uncharacterized protein from Saccharomyces cerevisiae (strain ATCC 204508 / S288c) (Baker's yeast).